A 921-amino-acid chain; its full sequence is Isoleucine--tRNA ligase (921 aa).

The 'HIGH' region signature appears at 57–67 (PYANGELHMGH). Glu552 provides a ligand contact to L-isoleucyl-5'-AMP. A 'KMSKS' region motif is present at residues 593–597 (KMSKS). Lys596 is an ATP binding site. Residues Cys888, Cys891, Cys908, and Cys911 each contribute to the Zn(2+) site.

Belongs to the class-I aminoacyl-tRNA synthetase family. IleS type 1 subfamily. In terms of assembly, monomer. Zn(2+) is required as a cofactor.

It is found in the cytoplasm. It catalyses the reaction tRNA(Ile) + L-isoleucine + ATP = L-isoleucyl-tRNA(Ile) + AMP + diphosphate. Functionally, catalyzes the attachment of isoleucine to tRNA(Ile). As IleRS can inadvertently accommodate and process structurally similar amino acids such as valine, to avoid such errors it has two additional distinct tRNA(Ile)-dependent editing activities. One activity is designated as 'pretransfer' editing and involves the hydrolysis of activated Val-AMP. The other activity is designated 'posttransfer' editing and involves deacylation of mischarged Val-tRNA(Ile). The chain is Isoleucine--tRNA ligase from Listeria welshimeri serovar 6b (strain ATCC 35897 / DSM 20650 / CCUG 15529 / CIP 8149 / NCTC 11857 / SLCC 5334 / V8).